A 594-amino-acid polypeptide reads, in one-letter code: UvrABC system protein C (594 aa).

The 78-residue stretch at 17-94 (LEPGCYLMKD…IKQYQPRYNI (78 aa)) folds into the GIY-YIG domain. Positions 199–234 (KTILNHLEERMNKASEQLDFEQAKEYRDMIQHIHNL) constitute a UVR domain.

The protein belongs to the UvrC family. In terms of assembly, interacts with UvrB in an incision complex.

Its subcellular location is the cytoplasm. Functionally, the UvrABC repair system catalyzes the recognition and processing of DNA lesions. UvrC both incises the 5' and 3' sides of the lesion. The N-terminal half is responsible for the 3' incision and the C-terminal half is responsible for the 5' incision. This chain is UvrABC system protein C, found in Staphylococcus epidermidis (strain ATCC 35984 / DSM 28319 / BCRC 17069 / CCUG 31568 / BM 3577 / RP62A).